Reading from the N-terminus, the 776-residue chain is 5-methyltetrahydropteroyltriglutamate--homocysteine methyltransferase (776 aa).

Residues 16 to 19 (RELK) and Lys-112 each bind 5-methyltetrahydropteroyltri-L-glutamate. L-homocysteine contacts are provided by residues 435–437 (IGS) and Glu-488. Residues 435 to 437 (IGS) and Glu-488 contribute to the L-methionine site. Residues 519-520 (RC) and Trp-565 each bind 5-methyltetrahydropteroyltri-L-glutamate. L-homocysteine is bound at residue Asp-603. Asp-603 is an L-methionine binding site. 5-methyltetrahydropteroyltri-L-glutamate is bound at residue Glu-609. Positions 645, 647, and 669 each coordinate Zn(2+). His-698 functions as the Proton donor in the catalytic mechanism. Cys-730 contacts Zn(2+).

It belongs to the vitamin-B12 independent methionine synthase family. Zn(2+) serves as cofactor.

It carries out the reaction 5-methyltetrahydropteroyltri-L-glutamate + L-homocysteine = tetrahydropteroyltri-L-glutamate + L-methionine. It participates in amino-acid biosynthesis; L-methionine biosynthesis via de novo pathway; L-methionine from L-homocysteine (MetE route): step 1/1. Its function is as follows. Catalyzes the transfer of a methyl group from 5-methyltetrahydrofolate to homocysteine resulting in methionine formation. The chain is 5-methyltetrahydropteroyltriglutamate--homocysteine methyltransferase from Ralstonia pickettii (strain 12J).